Here is a 411-residue protein sequence, read N- to C-terminus: Methyl-CpG-binding domain protein 2 (411 aa).

The interval 1-149 is required for interaction with DHX9 and PRMT5; the sequence is MRAHPGGGRC…GPRATESGKR (149 aa). The disordered stretch occupies residues 1–158; the sequence is MRAHPGGGRC…RMDCPALPPG (158 aa). Residues 77 to 95 show a composition bias toward basic residues; sequence GRGRGRGRGRGRGRGRGRG. Over residues 98 to 121 the composition is skewed to gly residues; the sequence is PSGGSGLGGDGGGCGGGGSGGGGA. The MBD domain occupies 145–213; it reads ESGKRMDCPA…SSFDFRTGKM (69 aa). Position 181 is a phosphoserine (Ser-181). The interval 214–241 is disordered; sequence MPSKLQKNKQRLRNDPLNQNKGKPDLNT. The span at 229 to 241 shows a compositional bias: polar residues; the sequence is PLNQNKGKPDLNT. Residue Ser-407 is modified to Phosphoserine.

Heterodimer with MBD3 (via N-terminus). Component of the MeCP1 complex that contains HDAC1 and HDAC2. Component of the nucleosome remodeling and deacetylase (NuRD) repressor complex, composed of core proteins MTA1, MTA2, MTA3, RBBP4, RBBP7, HDAC1, HDAC2, MBD2, MBD3, and peripherally associated proteins CDK2AP1, CDK2AP2, GATAD2A, GATAD2B, CHD3, CHD4 and CHD5. The exact stoichiometry of the NuRD complex is unknown, and some subunits such as MBD2 and MBD3, GATAD2A and GATAD2B, and CHD3, CHD4 and CHD5 define mutually exclusive NuRD complexes. Interacts with CDK2AP1. Interacts with DHX9. Interacts with DNMT1. Interacts with GATAD2A/p66-alpha. Interacts with GATAD2B/p66-beta. Interacts with GPN1. Interacts with MIZF. Interacts with PRMT5. Interacts with SIN3A. Interacts with SPHK2. As to expression, highly expressed in brain, heart, kidney, stomach, testis and placenta.

The protein localises to the nucleus. The protein resides in the chromosome. Binds CpG islands in promoters where the DNA is methylated at position 5 of cytosine within CpG dinucleotides. Binds hemimethylated DNA as well. Recruits histone deacetylases and DNA methyltransferases to chromatin. Acts as a component of the histone deacetylase NuRD complex which participates in the remodeling of chromatin. Acts as a transcriptional repressor and plays a role in gene silencing. Functions as a scaffold protein, targeting GATAD2A and GATAD2B to chromatin to promote repression. May enhance the activation of some unmethylated cAMP-responsive promoters. This Homo sapiens (Human) protein is Methyl-CpG-binding domain protein 2.